The primary structure comprises 247 residues: Coproheme decarboxylase (247 aa).

Fe-coproporphyrin III-binding positions include Arg-129, 143 to 147, His-170, Gln-183, and Ser-221; that span reads YPMDK. Tyr-143 is a catalytic residue.

This sequence belongs to the ChdC family. Type 1 subfamily. Fe-coproporphyrin III is required as a cofactor.

The catalysed reaction is Fe-coproporphyrin III + 2 H2O2 + 2 H(+) = heme b + 2 CO2 + 4 H2O. It catalyses the reaction Fe-coproporphyrin III + H2O2 + H(+) = harderoheme III + CO2 + 2 H2O. It carries out the reaction harderoheme III + H2O2 + H(+) = heme b + CO2 + 2 H2O. It functions in the pathway porphyrin-containing compound metabolism; protoheme biosynthesis. Functionally, involved in coproporphyrin-dependent heme b biosynthesis. Catalyzes the decarboxylation of Fe-coproporphyrin III (coproheme) to heme b (protoheme IX), the last step of the pathway. The reaction occurs in a stepwise manner with a three-propionate intermediate. This chain is Coproheme decarboxylase, found in Bacillus cereus (strain AH820).